The primary structure comprises 962 residues: Protein suppressor of underreplication (962 aa).

5 disordered regions span residues 353–413, 438–590, 658–712, 866–900, and 916–962; these read EIVT…TRAA, TPTP…LSGS, NSSH…SPDL, QERTQPSNGNRNSIVASLRKSPKSPKHGARTTQAT, and QTSS…ELFK. The span at 372–382 shows a compositional bias: basic residues; sequence PRTKSKKKCSK. Residues 386 to 395 are compositionally biased toward basic and acidic residues; it reads PCKEADLTDS. Composition is skewed to polar residues over residues 438-448 and 480-489; these read TPTPSGATTAI and LTRSAESKIN. Basic and acidic residues predominate over residues 524-552; that stretch reads VKQESKAKAKPEQKKKIKTVDKPAQETPK. Residues 553–562 are compositionally biased toward basic residues; the sequence is RKPGRPRKCK. Polar residues predominate over residues 564–576; that stretch reads LTETLGKSKTKPN. The span at 673-683 shows a compositional bias: basic residues; that stretch reads RRTKALKRKRK. 2 stretches are compositionally biased toward polar residues: residues 703 to 712 and 866 to 880; these read RSATNKSPDL and QERTQPSNGNRNSIV. Over residues 885–894 the composition is skewed to basic residues; that stretch reads KSPKSPKHGA. Residues 916–944 are compositionally biased toward polar residues; it reads QTSSVESVSAPSTPVNPSTSAAACQTRTA. Basic residues predominate over residues 953–962; the sequence is TKRKRLELFK.

It is found in the nucleus. Its subcellular location is the chromosome. Its function is as follows. Required for underreplication of DNA, which is found in many late replicating euchromatic regions of salivary gland polytene chromosomes. Controls chromatin organization in polytene chromosomes. This Drosophila erecta (Fruit fly) protein is Protein suppressor of underreplication (SuUR).